Here is a 40-residue protein sequence, read N- to C-terminus: Photosystem II reaction center protein X (40 aa).

Residues 10–30 (FFYSILFGAIVLGLLGGGFIF) traverse the membrane as a helical segment.

Belongs to the PsbX family. Type 1 subfamily. In terms of assembly, PSII is composed of 1 copy each of membrane proteins PsbA, PsbB, PsbC, PsbD, PsbE, PsbF, PsbH, PsbI, PsbJ, PsbK, PsbL, PsbM, PsbT, PsbX, PsbY, PsbZ, Psb30/Ycf12, peripheral proteins PsbO, CyanoQ (PsbQ), PsbU, PsbV and a large number of cofactors. It forms dimeric complexes.

The protein localises to the cellular thylakoid membrane. Functionally, involved in the binding and/or turnover of quinones at the Q(B) site of photosystem II (PSII). PSII is a light-driven water plastoquinone oxidoreductase, using light energy to abstract electrons from H(2)O, generating a proton gradient subsequently used for ATP formation. The sequence is that of Photosystem II reaction center protein X from Acaryochloris marina (strain MBIC 11017).